The primary structure comprises 360 residues: Glycerol-3-phosphate dehydrogenase [NAD(+)], cytoplasmic (360 aa).

NAD(+) is bound by residues 11–16, Phe-98, Lys-121, and Ala-155; that span reads GSGNWG. Lys-121 serves as a coordination point for substrate. Lys-206 functions as the Proton acceptor in the catalytic mechanism. Arg-270 and Gln-299 together coordinate NAD(+). 270 to 271 is a binding site for substrate; that stretch reads RN.

It belongs to the NAD-dependent glycerol-3-phosphate dehydrogenase family. As to quaternary structure, homodimer.

The protein localises to the cytoplasm. The enzyme catalyses sn-glycerol 3-phosphate + NAD(+) = dihydroxyacetone phosphate + NADH + H(+). The protein operates within phospholipid metabolism; alpha-glycerophosphate cycle. This chain is Glycerol-3-phosphate dehydrogenase [NAD(+)], cytoplasmic (Gpdh1), found in Drosophila kanekoi (Fruit fly).